We begin with the raw amino-acid sequence, 599 residues long: Group II intron-encoded protein LtrA (599 aa).

Residues 70–361 (IIQSLKDGTY…QPARFLGYDI (292 aa)) enclose the Reverse transcriptase domain. The intron maturase type-2 stretch occupies residues 381–549 (NGSVELLIPL…AKCCELCGTS (169 aa)).

It in the N-terminal section; belongs to the bacterial reverse transcriptase family. Homodimer. It depends on Mg(2+) as a cofactor.

The catalysed reaction is DNA(n) + a 2'-deoxyribonucleoside 5'-triphosphate = DNA(n+1) + diphosphate. In terms of biological role, multifunctional protein that promotes group II intron splicing and mobility by acting both on RNA and DNA. It has three activities: reverse transcriptase (RT) for intron duplication, maturase to promote splicing, and DNA endonuclease for site-specific cleavage of recipient alleles. The intron-encoded protein promotes splicing by facilitating the formation of the catalytically active structure of the intron RNA. After splicing, the protein remains bound to the excised intron lariat RNA, forming ribonucleoprotein particles, and cleaving the antisense strand of the recipient DNA in the 3' exon. After DNA cleavage, retrohoming occurs by a target DNA-primed reverse transcription of the intron RNA that had reverse spliced into the sense strand of the recipient DNA. It also contributes to the recognition of the DNA target site and acts as a repressor of its own translation. This Lactococcus lactis subsp. cremoris (Streptococcus cremoris) protein is Group II intron-encoded protein LtrA (ltrA).